Here is a 408-residue protein sequence, read N- to C-terminus: MSDAPKKVVLAYSGGLDTSIILKWLQTEYGCEVITFTADLGQGEELEPARQKAELLGIKPENIHIVDVREEFVRDFVFPMFRANAVYEGLYLLGTSIARPLISKHLVEIAHQHGADAVAHGATGKGNDQVRFELSAYALDPSIKVIAPWREWDLTSRTKLIEFAEQNQIPIAKDKRGEAPFSVDANLLHTSSEGKALENPADEAPDYVYQRTVSPEDAPDQPEYIEVSFERGDAVAINGEALSPATILTALNEYGRKHGIGRLDFVENRFVGMKSRGIYETPGGTILLEAHRGIEQITLDSGAGHLKDSIMPRYAELIYNGFWYSPEREMLQALIDKSQEHVTGTVRLKLYKGGVHTVGRWSEHSLYSEKHVTFEDDAGAYDQKDAAGFIRLNALRLKLVANRNARFK.

Residues 11–19 and Ala-38 each bind ATP; that span reads AYSGGLDTS. The L-citrulline site is built by Tyr-91 and Ser-96. ATP is bound at residue Gly-121. The L-aspartate site is built by Thr-123, Asn-127, and Asp-128. L-citrulline is bound at residue Asn-127. L-citrulline-binding residues include Arg-131, Ser-182, Ser-191, Glu-267, and Tyr-279.

It belongs to the argininosuccinate synthase family. Type 1 subfamily. As to quaternary structure, homotetramer.

It is found in the cytoplasm. It catalyses the reaction L-citrulline + L-aspartate + ATP = 2-(N(omega)-L-arginino)succinate + AMP + diphosphate + H(+). The protein operates within amino-acid biosynthesis; L-arginine biosynthesis; L-arginine from L-ornithine and carbamoyl phosphate: step 2/3. In Paracoccus denitrificans (strain Pd 1222), this protein is Argininosuccinate synthase.